The primary structure comprises 326 residues: Neuferricin homolog (326 aa).

Positions 1–34 are cleaved as a signal peptide; the sequence is MDKNRRRTDDAGLMTKTLAGIAALVFFLSFICSS. The region spanning 98-197 is the Cytochrome b5 heme-binding domain; sequence KHVFTPEQLH…KEYPLVGVVA (100 aa).

It belongs to the cytochrome b5 family. MAPR subfamily.

Its subcellular location is the secreted. Heme-binding protein. The sequence is that of Neuferricin homolog (tag-131) from Caenorhabditis elegans.